We begin with the raw amino-acid sequence, 306 residues long: Polyadenylate-binding protein 2 (306 aa).

Positions 1–12 (MAAAAAAAAAAG) are enriched in low complexity. Positions 1-115 (MAAAAAAAAA…EGDPGDGAIE (115 aa)) are disordered. N-acetylalanine is present on Ala-2. The interaction with SKIP stretch occupies residues 2–145 (AAAAAAAAAA…LKELQNEVEK (144 aa)). At Arg-17 the chain carries Omega-N-methylarginine. The residue at position 19 (Ser-19) is a Phosphoserine. Over residues 30 to 47 (GAGGEAGEGAPGGAGDYG) the composition is skewed to gly residues. Over residues 51-72 (ESEELEPEELLLEPEPEPEPEE) the composition is skewed to acidic residues. Ser-52 carries the post-translational modification Phosphoserine. Over residues 77–87 (PRAPPGAPGPG) the composition is skewed to pro residues. Positions 115–151 (EDPELEAIKARVREMEEEAEKLKELQNEVEKQMNMSP) form a coiled coil. The segment at 119–147 (LEAIKARVREMEEEAEKLKELQNEVEKQM) is stimulates PAPOLA. Phosphoserine occurs at positions 150 and 235. A necessary for homooligomerization region spans residues 155-306 (NAGPVIMSIE…ARATSWYSPY (152 aa)). Residues 172–249 (RSIYVGNVDY…RQIKVIPKRT (78 aa)) form the RRM domain. Arg-238, Arg-259, and Arg-263 each carry asymmetric dimethylarginine; alternate. Residues Arg-238, Arg-259, and Arg-263 each carry the omega-N-methylarginine; alternate modification. Arg-265, Arg-267, Arg-269, Arg-277, Arg-279, Arg-287, Arg-289, Arg-291, Arg-294, Arg-296, and Arg-298 each carry asymmetric dimethylarginine. Residues 286–306 (SRPRGRVYRGRARATSWYSPY) are interaction with PAPOLA.

In terms of assembly, monomer and homooligomer. Binds RNA as a monomer and oligomerizes when bound to poly(A). Associates in a ternary complex with CPSF4 and NS/NS1 and interaction with NS/NS1, blocks nuclear export of host cell mRNAs. Associates in a single complex with SKIP and MYOD1 and interacts with SKIP in differentiated myocytes. Interacts with NUDT21/CPSF5. Identified in a IGF2BP1-dependent mRNP granule complex containing untranslated mRNAs. Interacts with PAPOLA, but only in presence of oligo(A) RNA. Interacts with transportin. May interact with SETX. Interacts (via RRM domain and C-terminal arginine-rich region) with ZFP36 (via hypophosphorylated form); this interaction occurs in the nucleus in a RNA-independent manner, decreases in presence of single-stranded poly(A) RNA-oligomer and in a p38-dependent-manner and may down-regulated RNA poly(A) polymerase activity. Component of the poly(A) tail exosome targeting (PAXT) complex composed of PABPN1, ZFC3H1 and MTREX. Interacts with ZFC3H1 in a RNase-insensitive manner. Interacts with FRG1. Interacts with ZC3H11A. Post-translationally, arginine dimethylation is asymmetric and involves PRMT1 and PRMT3. It does not influence the RNA binding properties. As to expression, ubiquitous.

It localises to the nucleus. The protein localises to the cytoplasm. Its subcellular location is the nucleus speckle. Functionally, involved in the 3'-end formation of mRNA precursors (pre-mRNA) by the addition of a poly(A) tail of 200-250 nt to the upstream cleavage product. Stimulates poly(A) polymerase (PAPOLA) conferring processivity on the poly(A) tail elongation reaction and also controls the poly(A) tail length. Increases the affinity of poly(A) polymerase for RNA. Is also present at various stages of mRNA metabolism including nucleocytoplasmic trafficking and nonsense-mediated decay (NMD) of mRNA. Cooperates with SKIP to synergistically activate E-box-mediated transcription through MYOD1 and may regulate the expression of muscle-specific genes. Binds to poly(A) and to poly(G) with high affinity. May protect the poly(A) tail from degradation. Subunit of the trimeric poly(A) tail exosome targeting (PAXT) complex, a complex that directs a subset of long and polyadenylated poly(A) RNAs for exosomal degradation. The RNA exosome is fundamental for the degradation of RNA in eukaryotic nuclei. Substrate targeting is facilitated by its cofactor MTREX, which links to RNA-binding protein adapters. The protein is Polyadenylate-binding protein 2 (PABPN1) of Bos taurus (Bovine).